The following is a 1127-amino-acid chain: WD repeat and HMG-box DNA-binding protein 1 (1127 aa).

7 WD repeats span residues 11–50 (GHPE…DPKS), 52–91 (SIGE…GILT), 92–131 (RFTT…QQKT), 134–173 (GHSA…CEAV), 184–223 (FNAK…NICT), 228–267 (FITQ…CLER), and 271–310 (EKGY…DVKQ). Disordered regions lie at residues 811–1013 (AAEQ…AENK) and 1064–1127 (KAKG…FKKE). The span at 819–829 (QNEEEDEEEED) shows a compositional bias: acidic residues. Positions 846 to 857 (GDSRAKPVKQDQ) are enriched in basic and acidic residues. The span at 858-877 (YEENNEEEMEEEEKEQEEAL) shows a compositional bias: acidic residues. Composition is skewed to polar residues over residues 881–891 (TPTANPFNKSV) and 918–937 (SASQ…TSIL). Over residues 948-960 (SASGSPSTSKSDS) the composition is skewed to low complexity. Positions 1013-1076 (KKPKTGFQLW…GDYPGEDGAD (64 aa)) form a DNA-binding region, HMG box. Residues 1087–1100 (NMASNGCPQENTDS) are compositionally biased toward polar residues.

In terms of assembly, homodimer. As to expression, found in oocytes and in various other cells.

Its subcellular location is the nucleus. The protein resides in the nucleoplasm. The protein localises to the cytoplasm. Core replisome component that acts as a replication initiation factor. Binds directly to the CMG complex and functions as a hub to recruit additional proteins to the replication fork. This is WD repeat and HMG-box DNA-binding protein 1 (wdhd1) from Xenopus laevis (African clawed frog).